The following is a 481-amino-acid chain: Rho GTPase-activating protein 15 (481 aa).

A phosphoserine mark is found at Ser-51, Ser-111, Ser-204, Ser-207, and Ser-249. The region spanning 87–197 (MVEKEGYLQK…WFQAIKNAID (111 aa)) is the PH domain. A Rho-GAP domain is found at 287–476 (SHLHTVCERE…FMLTEYDKIF (190 aa)).

It localises to the cytoplasm. Its subcellular location is the membrane. GTPase activator for the Rho-type GTPases by converting them to an inactive GDP-bound state. Has activity toward RAC1. Overexpression results in an increase in actin stress fibers and cell contraction. In Mus musculus (Mouse), this protein is Rho GTPase-activating protein 15 (Arhgap15).